Reading from the N-terminus, the 214-residue chain is MSVPQIHVEEVGAEEGAGAAAPPDDHLRSLKALTEKLRLETRRPSYLEWQARLEEHTWPFPRPAAEPQASLEEGERGGQEPLLPLREAGQHPPSARSASQGARPLSTGKLEGFQSIDEAIAWLRKELTEMRLQDQQLARQLMRLRGDINKLKIEHTCRLHRRMLNDATYELEERDELADLFCDSPLASSFSLSTPLKLIGVTKMNINSRRFSLC.

Disordered regions lie at residues 1-26 and 59-108; these read MSVP…PDDH and PFPR…LSTG. A coiled-coil region spans residues 118–156; the sequence is EAIAWLRKELTEMRLQDQQLARQLMRLRGDINKLKIEHT.

Belongs to the FAM167 (SEC) family. Expressed in skin, including primary keratinocytes, spleen, kidney, leukocytes, testis, lung, small intestine and prostate.

This chain is Protein FAM167A (FAM167A), found in Homo sapiens (Human).